The sequence spans 93 residues: Small ribosomal subunit protein uS19 (93 aa).

It belongs to the universal ribosomal protein uS19 family.

Its function is as follows. Protein S19 forms a complex with S13 that binds strongly to the 16S ribosomal RNA. This Micrococcus luteus (strain ATCC 4698 / DSM 20030 / JCM 1464 / CCM 169 / CCUG 5858 / IAM 1056 / NBRC 3333 / NCIMB 9278 / NCTC 2665 / VKM Ac-2230) (Micrococcus lysodeikticus) protein is Small ribosomal subunit protein uS19.